A 316-amino-acid polypeptide reads, in one-letter code: Mitochondrial GTPase 1 (316 aa).

Residues 28-203 form the CP-type G domain; it reads MKQMQQKLKQ…LLDTPGILKP (176 aa). GTP contacts are provided by residues 73-76, 147-152, and Gly199; these read NKKD and NVGKSS.

This sequence belongs to the TRAFAC class YlqF/YawG GTPase family. MTG1 subfamily.

It is found in the mitochondrion inner membrane. Functionally, plays a role in the regulation of the mitochondrial ribosome assembly and of translational activity. Displays mitochondrial GTPase activity. This is Mitochondrial GTPase 1 from Aedes aegypti (Yellowfever mosquito).